The primary structure comprises 589 residues: 5'-AMP-activated protein kinase catalytic subunit alpha-1 (589 aa).

Residues 24–276 (FVIKETIGKG…VKRIVNHSWF (253 aa)) form the Protein kinase domain. ATP is bound by residues 30-38 (IGKGAFGAV) and Lys53. The active-site Proton acceptor is Asp147.

It belongs to the protein kinase superfamily. CAMK Ser/Thr protein kinase family. SNF1 subfamily.

The catalysed reaction is L-seryl-[protein] + ATP = O-phospho-L-seryl-[protein] + ADP + H(+). The enzyme catalyses L-threonyl-[protein] + ATP = O-phospho-L-threonyl-[protein] + ADP + H(+). Functionally, probably does not act as a sensor that couples lifespan to information about energy levels and insulin-like signals. Together with aak-2, involved in the establishment of germline stem cell (GSC) quiescence during dauer development. Plays a role in the maintenance of glycogen stores which are necessary for resistance to hyperosmotic stress. In Caenorhabditis elegans, this protein is 5'-AMP-activated protein kinase catalytic subunit alpha-1 (aak-1).